The chain runs to 588 residues: Transmembrane protein 201 homolog (588 aa).

At Met1–Glu212 the chain is on the nuclear side. A helical membrane pass occupies residues Ala213–Leu233. The Perinuclear space segment spans residues Gln234 to Glu254. A helical membrane pass occupies residues Val255–Phe275. Residues Asn276–Arg280 lie on the Nuclear side of the membrane. Residues Val281–Thr301 traverse the membrane as a helical segment. Residues Ser302 to Asp309 are Perinuclear space-facing. The chain crosses the membrane as a helical span at residues Val310–Leu330. Topologically, residues Leu331 to Gly564 are nuclear. Positions Arg378–Pro457 are disordered. Residues Pro384–Pro396 show a composition bias toward low complexity. Polar residues-rich tracts occupy residues Asn418–Val430 and Met441–Ser452. The chain crosses the membrane as a helical span at residues Ile565–Phe585. The Perinuclear space segment spans residues Thr586 to Asn588.

The protein belongs to the TMEM201 family.

It is found in the nucleus inner membrane. In terms of biological role, plays a role in nuclear migration in hypodermal cells. The chain is Transmembrane protein 201 homolog from Caenorhabditis elegans.